A 166-amino-acid polypeptide reads, in one-letter code: Ribosome maturation factor RimM (166 aa).

Residues 90–163 enclose the PRC barrel domain; it reads EGQYFIKDII…KIVIKAVEEW (74 aa).

Belongs to the RimM family. As to quaternary structure, binds ribosomal protein uS19.

Its subcellular location is the cytoplasm. An accessory protein needed during the final step in the assembly of 30S ribosomal subunit, possibly for assembly of the head region. Essential for efficient processing of 16S rRNA. May be needed both before and after RbfA during the maturation of 16S rRNA. It has affinity for free ribosomal 30S subunits but not for 70S ribosomes. The sequence is that of Ribosome maturation factor RimM from Clostridium acetobutylicum (strain ATCC 824 / DSM 792 / JCM 1419 / IAM 19013 / LMG 5710 / NBRC 13948 / NRRL B-527 / VKM B-1787 / 2291 / W).